The primary structure comprises 282 residues: MINIGPPKKRRLRRKGNRFKKTRRVIPWRRLMIGALWGTMALASLGMVVAVACFAGQMLFASDYFKVERIQVENNRRIGREEILALSDICPGTNIFELDLERVSTRIEKNPWIASARVRRMFPDQLVIRVDERIPKAIVRLDFMYYLDASGHVFKRLEKGDRLDFPVISGVDRQALLEGNEATLSQIDKALRLLDRLDGRKIFAIDDVSELSLDDTTGITLYTCIGGVPVRMGHDDYNSKLNRLEKIFPQLKTRLGLIDYIDTNVTRRIIVKLDAGELRGKG.

Over M1–R30 the chain is Cytoplasmic. The helical transmembrane segment at L31–V51 threads the bilayer. Residues A52–G282 are Periplasmic-facing. A POTRA domain is found at F65 to R133.

Belongs to the FtsQ/DivIB family. FtsQ subfamily.

It is found in the cell inner membrane. Functionally, essential cell division protein. The chain is Cell division protein FtsQ from Syntrophotalea carbinolica (strain DSM 2380 / NBRC 103641 / GraBd1) (Pelobacter carbinolicus).